The primary structure comprises 572 residues: Nuclear hormone receptor family member nhr-25 (572 aa).

The segment at residues G15 to A90 is a DNA-binding region (nuclear receptor). NR C4-type zinc fingers lie at residues C18–C38 and C54–C78. The 261-residue stretch at P307 to V567 folds into the NR LBD domain.

Belongs to the nuclear hormone receptor family. Interacts with lin-39. Interacts with nob-1. In terms of tissue distribution, expressed in the epidermis, the developing somatic gonad, and a subset of other epithelial cells.

The protein resides in the nucleus. In terms of biological role, orphan nuclear receptor and probable transcription activator, required during development. Plays a role in male tail tip morphogenesis regulating the expression of the transcription factor dmd-3 in a negative feedback loop. Regulates vulval precursor cell (VPC) differentiation, in concert with homeobox protein lin-39. Involved in promoting embryogenesis, in concert with homeobox protein nob-1. May play a role in modulation of lifespan and immunity. In Caenorhabditis elegans, this protein is Nuclear hormone receptor family member nhr-25.